An 829-amino-acid chain; its full sequence is Receptor-type tyrosine-protein phosphatase alpha (829 aa).

An N-terminal signal peptide occupies residues 1-19 (MDSWFILVLFGSGLIHVSA). The Extracellular portion of the chain corresponds to 20 to 142 (NNATTVSPSL…ETFPPADETP (123 aa)). Residues Asn-21, Asn-47, Asn-51, Asn-68, Asn-80, Asn-86, Asn-104, and Asn-124 are each glycosylated (N-linked (GlcNAc...) asparagine). A disordered region spans residues 79-106 (VNSSHSDNGTRRAASTESGGTTISPNGS). A helical transmembrane segment spans residues 143–166 (IIAVMVALSSLLVIVFIIIVLYML). The Cytoplasmic segment spans residues 167–829 (RFKKYKQAGS…DAFSDYANFK (663 aa)). A phosphoserine mark is found at Ser-202 and Ser-204. 2 consecutive Tyrosine-protein phosphatase domains span residues 232-528 (FREE…LLEH) and 560-818 (LEEE…VQEY). Residues Asp-437, 469–475 (CSAGVGR), and Gln-513 contribute to the substrate site. Cys-469 acts as the Phosphocysteine intermediate in catalysis. Cys-759 acts as the Phosphocysteine intermediate in catalysis. A Phosphotyrosine modification is found at Tyr-825.

Belongs to the protein-tyrosine phosphatase family. Receptor class 4 subfamily. In terms of assembly, part of a complex comprised of PTPRA, BCAR1, BCAR3 (via SH2 domain), and SRC. Within the complex, interacts (when phosphorylated on Tyr-825) with BCAR3 (via SH2 domain). Interacts with GRB2. In terms of processing, integrin binding to extracellular matrix induces phosphorylation at Tyr-825 which induces PTPRA localization and recruitment of BCAR3, BCAR1 and CRK to focal adhesions. As to expression, widely expressed. Highest expression in brain and kidney.

Its subcellular location is the cell membrane. The protein resides in the cell junction. It localises to the focal adhesion. It catalyses the reaction O-phospho-L-tyrosyl-[protein] + H2O = L-tyrosyl-[protein] + phosphate. Its function is as follows. Tyrosine protein phosphatase which is involved in integrin-mediated focal adhesion formation. Following integrin engagement, specifically recruits BCAR3, BCAR1 and CRK to focal adhesions thereby promoting SRC-mediated phosphorylation of BRAC1 and the subsequent activation of PAK and small GTPase RAC1 and CDC42. In Mus musculus (Mouse), this protein is Receptor-type tyrosine-protein phosphatase alpha (Ptpra).